A 1373-amino-acid chain; its full sequence is DNA-directed RNA polymerase subunit beta'' (1373 aa).

Zn(2+) contacts are provided by C224, C296, C303, and C306.

This sequence belongs to the RNA polymerase beta' chain family. RpoC2 subfamily. In terms of assembly, in plastids the minimal PEP RNA polymerase catalytic core is composed of four subunits: alpha, beta, beta', and beta''. When a (nuclear-encoded) sigma factor is associated with the core the holoenzyme is formed, which can initiate transcription. The cofactor is Zn(2+).

Its subcellular location is the plastid. The protein resides in the chloroplast. The catalysed reaction is RNA(n) + a ribonucleoside 5'-triphosphate = RNA(n+1) + diphosphate. Its function is as follows. DNA-dependent RNA polymerase catalyzes the transcription of DNA into RNA using the four ribonucleoside triphosphates as substrates. This is DNA-directed RNA polymerase subunit beta'' from Amborella trichopoda.